We begin with the raw amino-acid sequence, 377 residues long: Protein-tyrosine sulfotransferase 2 (377 aa).

The Cytoplasmic segment spans residues 1 to 8; the sequence is MRLSMRRA. A helical; Signal-anchor for type II membrane protein transmembrane segment spans residues 9–25; sequence LLAAGLALALVLAVHLG. Topologically, residues 26–377 are lumenal; it reads QRVLECQAVL…NSTSSHLGSS (352 aa). 78–82 is a 3'-phosphoadenylyl sulfate binding site; sequence RSGTT. Cys96 and Cys156 form a disulfide bridge. Glu99 serves as the catalytic Proton donor/acceptor. The segment at 101-105 is interaction with peptide substrate; it reads RIIPR. 3'-phosphoadenylyl sulfate-binding residues include Arg183, Ser191, and Arg195. Residues Cys225 and Cys233 are joined by a disulfide bond. 3'-phosphoadenylyl sulfate contacts are provided by residues Tyr238, 285-294, and Lys300; that span reads STDQVIKPVN. 2 N-linked (GlcNAc...) asparagine glycosylation sites follow: Asn343 and Asn368.

It belongs to the protein sulfotransferase family. Homodimer. Can also form heterodimers with TPST1. In terms of processing, N-glycosylated.

The protein localises to the golgi apparatus membrane. It catalyses the reaction L-tyrosyl-[protein] + 3'-phosphoadenylyl sulfate = O-sulfo-L-tyrosine-[protein] + adenosine 3',5'-bisphosphate + H(+). Catalyzes the O-sulfation of tyrosine residues within acidic motifs of polypeptides, using 3'-phosphoadenylyl sulfate (PAPS) as cosubstrate. In Bos taurus (Bovine), this protein is Protein-tyrosine sulfotransferase 2 (TPST2).